A 309-amino-acid chain; its full sequence is Porphobilinogen deaminase (309 aa).

Cysteine 244 bears the S-(dipyrrolylmethanemethyl)cysteine mark.

The protein belongs to the HMBS family. As to quaternary structure, monomer. It depends on dipyrromethane as a cofactor.

The enzyme catalyses 4 porphobilinogen + H2O = hydroxymethylbilane + 4 NH4(+). Its pathway is porphyrin-containing compound metabolism; protoporphyrin-IX biosynthesis; coproporphyrinogen-III from 5-aminolevulinate: step 2/4. Tetrapolymerization of the monopyrrole PBG into the hydroxymethylbilane pre-uroporphyrinogen in several discrete steps. In Agrobacterium fabrum (strain C58 / ATCC 33970) (Agrobacterium tumefaciens (strain C58)), this protein is Porphobilinogen deaminase.